The chain runs to 366 residues: tRNA/tmRNA (uracil-C(5))-methyltransferase (366 aa).

Glutamine 190, tyrosine 218, asparagine 223, glutamate 239, and aspartate 299 together coordinate S-adenosyl-L-methionine. The active-site Nucleophile is cysteine 324. Residue glutamate 358 is the Proton acceptor of the active site.

Belongs to the class I-like SAM-binding methyltransferase superfamily. RNA M5U methyltransferase family. TrmA subfamily.

The enzyme catalyses uridine(54) in tRNA + S-adenosyl-L-methionine = 5-methyluridine(54) in tRNA + S-adenosyl-L-homocysteine + H(+). It catalyses the reaction uridine(341) in tmRNA + S-adenosyl-L-methionine = 5-methyluridine(341) in tmRNA + S-adenosyl-L-homocysteine + H(+). Its function is as follows. Dual-specificity methyltransferase that catalyzes the formation of 5-methyluridine at position 54 (m5U54) in all tRNAs, and that of position 341 (m5U341) in tmRNA (transfer-mRNA). The protein is tRNA/tmRNA (uracil-C(5))-methyltransferase of Salmonella newport (strain SL254).